The primary structure comprises 617 residues: Dihydroxy-acid dehydratase (617 aa).

Residue Asp81 participates in Mg(2+) binding. Cys122 contributes to the [2Fe-2S] cluster binding site. Positions 123 and 124 each coordinate Mg(2+). An N6-carboxylysine modification is found at Lys124. [2Fe-2S] cluster is bound at residue Cys195. Glu490 is a Mg(2+) binding site. Catalysis depends on Ser516, which acts as the Proton acceptor.

Belongs to the IlvD/Edd family. As to quaternary structure, homodimer. [2Fe-2S] cluster serves as cofactor. Mg(2+) is required as a cofactor.

The catalysed reaction is (2R)-2,3-dihydroxy-3-methylbutanoate = 3-methyl-2-oxobutanoate + H2O. It carries out the reaction (2R,3R)-2,3-dihydroxy-3-methylpentanoate = (S)-3-methyl-2-oxopentanoate + H2O. It functions in the pathway amino-acid biosynthesis; L-isoleucine biosynthesis; L-isoleucine from 2-oxobutanoate: step 3/4. Its pathway is amino-acid biosynthesis; L-valine biosynthesis; L-valine from pyruvate: step 3/4. In terms of biological role, functions in the biosynthesis of branched-chain amino acids. Catalyzes the dehydration of (2R,3R)-2,3-dihydroxy-3-methylpentanoate (2,3-dihydroxy-3-methylvalerate) into 2-oxo-3-methylpentanoate (2-oxo-3-methylvalerate) and of (2R)-2,3-dihydroxy-3-methylbutanoate (2,3-dihydroxyisovalerate) into 2-oxo-3-methylbutanoate (2-oxoisovalerate), the penultimate precursor to L-isoleucine and L-valine, respectively. In Acidiphilium cryptum (strain JF-5), this protein is Dihydroxy-acid dehydratase.